Reading from the N-terminus, the 1489-residue chain is Chromosome partition protein MukB (1489 aa).

34–41 contacts ATP; sequence GGNGAGKS. Coiled-coil stretches lie at residues 326–418, 444–472, 509–602, 780–805, 835–919, 977–1116, and 1209–1266; these read LEAD…QYNQ, LETFQAKEQEATEKLLSLEQKMSVAQTAH, RHLA…QRAP, RAARENRIESLHAEREGLSERFATLS, EAEI…GNQL, EMLS…AKAG, and VEAI…QNVS. The flexible hinge stretch occupies residues 666 to 783; the sequence is PGGSEDSRLN…TVPIFGRAAR (118 aa).

Belongs to the SMC family. MukB subfamily. Homodimerization via its hinge domain. Binds to DNA via its C-terminal region. Interacts, and probably forms a ternary complex, with MukE and MukF via its C-terminal region. The complex formation is stimulated by calcium or magnesium. Interacts with tubulin-related protein FtsZ.

Its subcellular location is the cytoplasm. The protein localises to the nucleoid. Plays a central role in chromosome condensation, segregation and cell cycle progression. Functions as a homodimer, which is essential for chromosome partition. Involved in negative DNA supercoiling in vivo, and by this means organize and compact chromosomes. May achieve or facilitate chromosome segregation by condensation DNA from both sides of a centrally located replisome during cell division. In Citrobacter koseri (strain ATCC BAA-895 / CDC 4225-83 / SGSC4696), this protein is Chromosome partition protein MukB.